The sequence spans 255 residues: uncharacterized protein (255 aa).

Positions 1–23 are cleaved as a signal peptide; it reads MKRLNKLVLGIIFLFLVISITAG. Cys-24 carries the N-palmitoyl cysteine lipid modification. A lipid anchor (S-diacylglycerol cysteine) is attached at Cys-24.

Belongs to the staphylococcal tandem lipoprotein family.

It localises to the cell membrane. This is an uncharacterized protein from Staphylococcus aureus (strain USA300).